The chain runs to 510 residues: Sulfoquinovosyl transferase SQD2 (510 aa).

The N-terminal 83 residues, 1–83, are a transit peptide targeting the chloroplast; the sequence is MTTLSSINLS…SNDMTITQVR (83 aa). Ser88 carries the post-translational modification Phosphoserine. The chain crosses the membrane as a helical span at residues 198–218; that stretch reads PGVMVFGALAIAKMLSVPIVM.

This sequence belongs to the glycosyltransferase group 1 family. Glycosyltransferase 4 subfamily.

It is found in the plastid. The protein resides in the chloroplast membrane. It carries out the reaction UDP-alpha-D-6-sulfoquinovose + a 1,2-diacyl-sn-glycerol = a 6-sulfo-alpha-D-quinovosyldiacylglycerol + UDP + H(+). It functions in the pathway glycolipid biosynthesis. Catalyzes the transfer of the sulfoquinovose moiety from UDP-sulfoquinovose to diacylglycerol during sulfolipid biosynthesis. Sulfolipid contributes to maintaining a negatively charged lipid-water interface, a requirement for proper function of photosynthetic membranes. Sulfolipid may also function as a substitute of anionic phospholipids under phosphate-limited growth conditions. This Arabidopsis thaliana (Mouse-ear cress) protein is Sulfoquinovosyl transferase SQD2.